A 673-amino-acid chain; its full sequence is Sodium/myo-inositol cotransporter 2 (673 aa).

Residues 1–27 (MESATISPQPPQSDSLEAFPQKSMEPA) are Extracellular-facing. A helical transmembrane segment spans residues 28–48 (DIAVLVLYFLFVLAVGLWSTV). Residues 49–65 (RTKRDTVKGYFLAGGDM) are Cytoplasmic-facing. Residues 66-88 (VWWPVGASLFASNVGSGHFIGLA) form a helical membrane-spanning segment. Over 89–102 (GSGAAVGISVAAYE) the chain is Extracellular. Residues 103–123 (LNGLFSVLMLAWVFLPIYIAG) traverse the membrane as a helical segment. Residues 124 to 148 (QVTTMPEYLRRRFGGNRISITLAVL) lie on the Cytoplasmic side of the membrane. A helical membrane pass occupies residues 149–169 (YLFIYIFTKISVDMYAGAIFI). Residues 170-180 (QQSLHLDLYLA) lie on the Extracellular side of the membrane. The helical transmembrane segment at 181-201 (IVGLLAITALYTVAGGLAAVI) threads the bilayer. The Cytoplasmic segment spans residues 202–208 (YTDALQT). Residues 209–229 (VIMLIGAFILMGYSFAAVGGM) traverse the membrane as a helical segment. Over 230-272 (EGLKDQYFLALASNRSENSSCGLPREDAFHIFRDPLTSDLPWP) the chain is Extracellular. A helical transmembrane segment spans residues 273-293 (GILFGMSIPSLWYWCTDQVIV). The Cytoplasmic portion of the chain corresponds to 294–308 (QRSLAAKNLSHAKGG). The helical transmembrane segment at 309–329 (SLMAAYLKVLPLFLMVFPGMV) threads the bilayer. Topologically, residues 330-375 (SRVLFPDQVACAHPDICQRVCSNPSGCSDIAYPKLVLELLPTGLRG) are extracellular. Residues 376-396 (LMMAVMVAALMSSLTSIFNSA) traverse the membrane as a helical segment. The Cytoplasmic portion of the chain corresponds to 397-418 (STIFTMDLWNHIRPRASERELM). The chain crosses the membrane as a helical span at residues 419 to 439 (IVGRIFVFALVLVSILWIPIV). The Extracellular portion of the chain corresponds to 440-446 (QASQGGQ). The chain crosses the membrane as a helical span at residues 447-467 (LFIYIQSISSYLQPPVAMVFI). The Cytoplasmic portion of the chain corresponds to 468-479 (MGCFWKRTNEKG). Residues 480–500 (AFSGLILGLLLGLVRLILDFV) form a helical membrane-spanning segment. The Extracellular portion of the chain corresponds to 501–521 (YAQPRCDQPDDRPAVVKDVHY). Residues 522–542 (LYFSMILSFTTLITVVTVSWF) form a helical membrane-spanning segment. The Cytoplasmic portion of the chain corresponds to 543 to 652 (TETPSKEMVS…SLEENPLVKT (110 aa)). Residues 653 to 673 (LLDVNCIVCISCAIFLWGYFA) traverse the membrane as a helical segment.

It belongs to the sodium:solute symporter (SSF) (TC 2.A.21) family.

It is found in the membrane. The protein resides in the apical cell membrane. The enzyme catalyses myo-inositol(out) + 2 Na(+)(out) = myo-inositol(in) + 2 Na(+)(in). The catalysed reaction is 1D-chiro-inositol(out) + 2 Na(+)(out) = 1D-chiro-inositol(in) + 2 Na(+)(in). It catalyses the reaction D-glucose(out) + 2 Na(+)(out) = D-glucose(in) + 2 Na(+)(in). It carries out the reaction D-xylose(out) + 2 Na(+)(out) = D-xylose(in) + 2 Na(+)(in). Its activity is regulated as follows. MI transport activity inhibited by D-chiro-inositol (DCI), phlorizin (Pz) and sodium (Na(+)). Insulin increases D-chiro-inositol uptake. Its function is as follows. Involved in the sodium-dependent cotransport of myo-inositol (MI) with a Na(+):MI stoichiometry of 2:1. Exclusively responsible for apical MI transport and absorption in intestine. Can also transport D-chiro-inositol (DCI) but not L-fucose. Exhibits stereospecific cotransport of both D-glucose and D-xylose. May induce apoptosis through the TNF-alpha, PDCD1 pathway. May play a role in the regulation of MI concentration in serum, involving reabsorption in at least the proximal tubule of the kidney. In Mus musculus (Mouse), this protein is Sodium/myo-inositol cotransporter 2.